The sequence spans 302 residues: Taste receptor type 2 member 104 (302 aa).

Residues 1–7 (MLSALES) are Extracellular-facing. A helical transmembrane segment spans residues 8–28 (ILLSVATSEAMLGVLGNTFIV). Residues 29–43 (LVNYTDWVRNKKLSK) are Cytoplasmic-facing. The chain crosses the membrane as a helical span at residues 44–64 (INFILTGLAISRIFTIWIITL). Topologically, residues 65-87 (DAYTKVFLLTMLMPSSLHECMSY) are extracellular. The chain crosses the membrane as a helical span at residues 88–108 (IWVIINHLSVWFSTSLGIFYF). The Cytoplasmic segment spans residues 109-128 (LKIANFSHYIFLWMKRRADK). The helical transmembrane segment at 129-149 (VFVFLIVFLIITWLASFPLAV) threads the bilayer. Residues 150–182 (KVIKDVKIYQSNTSWLIHLEKSELLINYVFANM) are Extracellular-facing. Asn161 carries N-linked (GlcNAc...) asparagine glycosylation. The chain crosses the membrane as a helical span at residues 183 to 203 (GPISLFIVAIIACFLLTISLW). Over 204–229 (RHSRQMQSIGSGFRDLNTEAHMKAMK) the chain is Cytoplasmic. Residues 230–250 (VLIAFIILFILYFLGILIETL) form a helical membrane-spanning segment. Residues 251 to 259 (CLFLTNNKL) lie on the Extracellular side of the membrane. Residues 260 to 280 (LFIFGFTLSAMYPCCHSFILI) form a helical membrane-spanning segment. Over 281–302 (LTSRELKQATMRALQRLKCCET) the chain is Cytoplasmic.

This sequence belongs to the G-protein coupled receptor T2R family.

Its subcellular location is the membrane. Its function is as follows. Putative taste receptor which may play a role in the perception of bitterness. This Mus musculus (Mouse) protein is Taste receptor type 2 member 104.